Here is a 568-residue protein sequence, read N- to C-terminus: Phosphoprotein (568 aa).

Disordered stretches follow at residues 1-23 (MDQDAFILKEDSEVEREAPGGRE) and 38-320 (SEPT…GIGE). A compositionally biased stretch (basic and acidic residues) spans 7-20 (ILKEDSEVEREAPG). The segment at 33 to 41 (DAVLSSEPT) is N0 binding. Residues 50–59 (LHNTINTPQG) are compositionally biased toward polar residues. The residue at position 68 (Ser-68) is a Phosphoserine; by host. Residues 83-101 (RSGEESRVSGRTSKPEAEA) are compositionally biased toward basic and acidic residues. Ser-125 carries the phosphoserine; by host modification. Basic and acidic residues predominate over residues 150-168 (GIEDENREMAAHPDKRGED). Positions 191–206 (ASNNGRSMEPGSSHSA) are enriched in polar residues. Ser-192, Ser-249, Ser-257, and Ser-260 each carry phosphoserine; by host. The segment at 344–411 (FESSRDASYV…SFRDIYKRFS (68 aa)) is multimerization. The stretch at 364 to 429 (YAEMTFNVCG…LLMSNLSTLH (66 aa)) forms a coiled coil. Residues 412–445 (EYQKEQNSLLMSNLSTLHIITDRGGKTDNTDSLT) form a l protein binding region. A phosphoserine; by host mark is found at Ser-447 and Ser-449. The tract at residues 479–568 (DLIREDEFRD…VEEDIESLTN (90 aa)) is interaction with the nucleocapsid (N-RNA). Residues 496–516 (QERDTEPRASNASRLLPSKEK) are disordered. Positions 547–566 (KTDQEVKAVMELVEEDIESL) are formation of N-RNA complex involved in transcription and replication.

Belongs to the respirovirus P protein family. In terms of assembly, homotetramer. Interacts (via multimerization domain) with polymerase L; this interaction forms the polymerase complex. Interacts (via N-terminus) with N0; this interaction allows P to chaperon N0 before encapsidation and form the N-P complex. Interacts (via C-terminus) with N-RNA template; this interaction positions the polymerase on the template. Post-translationally, phosphorylated by PKC/PRKCZ, and other unknown kinases. Phosphorylation is necessary for viral transcription and replication. The N-terminus contains the majority of phosphorylated sites. Ser-249 is the major site of phosphorylation, but is not necessary for most functions.

The protein localises to the host cytoplasm. Functionally, essential cofactor of the RNA polymerase L that plays a central role in the transcription and replication by forming the polymerase complex with RNA polymerase L and recruiting L to the genomic N-RNA template for RNA synthesis. Also plays a central role in the encapsidation of nascent RNA chains by forming the encapsidation complex with the nucleocapsid protein N (N-P complex). Acts as a chaperone for newly synthesized free N protein, so-called N0, allowing encapsidation of nascent RNA chains during replication. The nucleoprotein protein N prevents excessive phosphorylation of P, which leads to down-regulation of viral transcription/ replication. Participates, together with N, in the formation of viral factories (viroplasms), which are large inclusions in the host cytoplasm where replication takes place. Recruits host PI4KB and remodel the host endoplasmic reticulum membrane to form viral replication factories. The protein is Phosphoprotein (P/V/C) of Cavia cutleri (Guinea pig).